The primary structure comprises 53 residues: UPF0391 membrane protein Acid_3618 (53 aa).

2 helical membrane-spanning segments follow: residues 6 to 26 (LVFLVFALIAAVLGFGGLAGA) and 28 to 48 (VGIAKILFFVFLVIWLVAFLM).

Belongs to the UPF0391 family.

It is found in the cell membrane. The protein is UPF0391 membrane protein Acid_3618 of Solibacter usitatus (strain Ellin6076).